Here is a 366-residue protein sequence, read N- to C-terminus: Aliphatic nitrilase (366 aa).

One can recognise a CN hydrolase domain in the interval 8-282 (FKVAAVQAQP…EGILYADIDL (275 aa)). Residue Glu-48 is the Proton acceptor of the active site. Lys-131 serves as the catalytic Proton donor. The active-site Nucleophile is Cys-165. The segment at 346 to 366 (DEQRALPSTHSDETDRATASI) is disordered. Over residues 355-366 (HSDETDRATASI) the composition is skewed to basic and acidic residues.

The protein belongs to the carbon-nitrogen hydrolase superfamily. Nitrilase family. As to quaternary structure, homodimer.

The enzyme catalyses an aliphatic nitrile + 2 H2O = a carboxylate + NH4(+). In Rhodococcus rhodochrous, this protein is Aliphatic nitrilase (nitA).